A 91-amino-acid chain; its full sequence is Large ribosomal subunit protein uL23c (91 aa).

The protein belongs to the universal ribosomal protein uL23 family. Part of the 50S ribosomal subunit.

Its subcellular location is the plastid. The protein localises to the chloroplast. Binds to 23S rRNA. This Marchantia polymorpha (Common liverwort) protein is Large ribosomal subunit protein uL23c (rpl23).